A 265-amino-acid chain; its full sequence is Hydroxyethylthiazole kinase (265 aa).

Met50 is a binding site for substrate. ATP is bound by residues Arg125 and Thr171. Gly198 lines the substrate pocket.

Belongs to the Thz kinase family. It depends on Mg(2+) as a cofactor.

It catalyses the reaction 5-(2-hydroxyethyl)-4-methylthiazole + ATP = 4-methyl-5-(2-phosphooxyethyl)-thiazole + ADP + H(+). It functions in the pathway cofactor biosynthesis; thiamine diphosphate biosynthesis; 4-methyl-5-(2-phosphoethyl)-thiazole from 5-(2-hydroxyethyl)-4-methylthiazole: step 1/1. Catalyzes the phosphorylation of the hydroxyl group of 4-methyl-5-beta-hydroxyethylthiazole (THZ). This Salmonella arizonae (strain ATCC BAA-731 / CDC346-86 / RSK2980) protein is Hydroxyethylthiazole kinase.